A 167-amino-acid chain; its full sequence is Ribonuclease H (167 aa).

In terms of domain architecture, RNase H type-1 spans 1 to 143 (MYKQIEIFTD…CDQLARKAAK (143 aa)). 4 residues coordinate Mg(2+): aspartate 10, glutamate 48, aspartate 70, and aspartate 135.

This sequence belongs to the RNase H family. As to quaternary structure, monomer. Mg(2+) serves as cofactor.

Its subcellular location is the cytoplasm. The enzyme catalyses Endonucleolytic cleavage to 5'-phosphomonoester.. In terms of biological role, endonuclease that specifically degrades the RNA of RNA-DNA hybrids. This Blochmanniella floridana protein is Ribonuclease H.